Here is a 588-residue protein sequence, read N- to C-terminus: Histone-arginine methyltransferase CARM1 (588 aa).

The SAM-dependent MTase PRMT-type domain maps to 120-427; that stretch reads AVQYFQFYGY…KRQSYDISIV (308 aa). Residues glutamine 133, arginine 142, glycine 166, glutamate 188, glutamate 217, and serine 245 each coordinate S-adenosyl-L-methionine. Residues 473–588 form a transactivation domain region; sequence TGGTYSMSQG…IPSNTMHYGS (116 aa).

The protein belongs to the class I-like SAM-binding methyltransferase superfamily. Protein arginine N-methyltransferase family. Homodimer.

The protein localises to the nucleus. It localises to the cytoplasm. The protein resides in the chromosome. The catalysed reaction is L-arginyl-[protein] + 2 S-adenosyl-L-methionine = N(omega),N(omega)-dimethyl-L-arginyl-[protein] + 2 S-adenosyl-L-homocysteine + 2 H(+). Its function is as follows. Methylates (mono- and asymmetric dimethylation) the guanidino nitrogens of arginyl residues in several proteins involved in DNA packaging, transcription regulation, pre-mRNA splicing, and mRNA stability. Recruited to promoters upon gene activation together with histone acetyltransferases from EP300/P300 and p160 families, methylates histone H3 at 'Arg-17' (H3R17me) and activates transcription via chromatin remodeling. This is Histone-arginine methyltransferase CARM1 (carm1) from Danio rerio (Zebrafish).